Here is a 351-residue protein sequence, read N- to C-terminus: Phosphoribosylformylglycinamidine cyclo-ligase (351 aa).

It belongs to the AIR synthase family.

The protein resides in the cytoplasm. It carries out the reaction 2-formamido-N(1)-(5-O-phospho-beta-D-ribosyl)acetamidine + ATP = 5-amino-1-(5-phospho-beta-D-ribosyl)imidazole + ADP + phosphate + H(+). It participates in purine metabolism; IMP biosynthesis via de novo pathway; 5-amino-1-(5-phospho-D-ribosyl)imidazole from N(2)-formyl-N(1)-(5-phospho-D-ribosyl)glycinamide: step 2/2. This Burkholderia pseudomallei (strain 668) protein is Phosphoribosylformylglycinamidine cyclo-ligase.